Reading from the N-terminus, the 540-residue chain is Chaperonin GroEL (540 aa).

ATP-binding positions include 30 to 33, lysine 51, 87 to 91, glycine 415, and aspartate 495; these read TLGP and DGTTT.

This sequence belongs to the chaperonin (HSP60) family. Forms a cylinder of 14 subunits composed of two heptameric rings stacked back-to-back. Interacts with the co-chaperonin GroES.

Its subcellular location is the cytoplasm. The enzyme catalyses ATP + H2O + a folded polypeptide = ADP + phosphate + an unfolded polypeptide.. Together with its co-chaperonin GroES, plays an essential role in assisting protein folding. The GroEL-GroES system forms a nano-cage that allows encapsulation of the non-native substrate proteins and provides a physical environment optimized to promote and accelerate protein folding. This chain is Chaperonin GroEL, found in Erwinia aphidicola.